The primary structure comprises 462 residues: Glycine--tRNA ligase (462 aa).

Positions 100 and 174 each coordinate substrate. Residues 206–208, 216–221, 290–291, and 334–337 each bind ATP; these read RNE, FRTREF, EL, and GADR. Residue 221 to 225 participates in substrate binding; that stretch reads FEQME. 330–334 contacts substrate; sequence EPSLG.

The protein belongs to the class-II aminoacyl-tRNA synthetase family. In terms of assembly, homodimer.

Its subcellular location is the cytoplasm. It carries out the reaction tRNA(Gly) + glycine + ATP = glycyl-tRNA(Gly) + AMP + diphosphate. Functionally, catalyzes the attachment of glycine to tRNA(Gly). This is Glycine--tRNA ligase from Acetivibrio thermocellus (strain ATCC 27405 / DSM 1237 / JCM 9322 / NBRC 103400 / NCIMB 10682 / NRRL B-4536 / VPI 7372) (Clostridium thermocellum).